The sequence spans 519 residues: MTEIRLTNTKSRRKEAFEPIDRKNVRLYVCGPTVYDRAHLGNGRPVVVFDVLFRLLRHVYGEGHVTYVRNFTDVDDKINAAALARKDAGDPRSLEALIRERTDETIRWYHEDMDALGALRPTQEPRATEWIGAMIAMIEDLIAKGHAYEREGHVLFRVRSYRDYGALSGRSVDDMIAGARVEVAPFKEDPMDFVLWKPSDDELPGWDSPWGRGRPGWHIECSAMADGLLMKDLPENERSFDIHAGGIDLQFPHHENEIAQSRCAHPEGEFAKVWMHNEMLLVDGKKMSKSLGNFFTVRELIEEYRKQFAVNNIGPAIRLRFLQGHYRAPIDAARHYIEQASVKLGLWWHFISEHLDAPITDKDRRDILATSPVIEALADDLNTPLAVTYIDGLVSRLRGGIQKQGYVDAEMDDLEMVAKRARVAIEFLGFTFDDLEEHHGPVQLKRLKERQLSASADVGVRIGRLLEERAEARKARDFARSDAIRDRLQAAGVLIKDSRDGATWELEPGFDPAKLGEPE.

C30 lines the Zn(2+) pocket. A 'HIGH' region motif is present at residues 32-42; that stretch reads PTVYDRAHLGN. Zn(2+)-binding residues include C221, H253, and E257. The 'KMSKS' region signature appears at 286 to 290; that stretch reads KMSKS. K289 provides a ligand contact to ATP.

It belongs to the class-I aminoacyl-tRNA synthetase family. In terms of assembly, monomer. Zn(2+) serves as cofactor.

It is found in the cytoplasm. The catalysed reaction is tRNA(Cys) + L-cysteine + ATP = L-cysteinyl-tRNA(Cys) + AMP + diphosphate. This Cereibacter sphaeroides (strain KD131 / KCTC 12085) (Rhodobacter sphaeroides) protein is Cysteine--tRNA ligase.